The following is a 309-amino-acid chain: Ribonuclease Z (309 aa).

Residues His64, His66, Asp68, His69, His141, Asp209, and His267 each contribute to the Zn(2+) site. The active-site Proton acceptor is the Asp68.

It belongs to the RNase Z family. As to quaternary structure, homodimer. The cofactor is Zn(2+).

The catalysed reaction is Endonucleolytic cleavage of RNA, removing extra 3' nucleotides from tRNA precursor, generating 3' termini of tRNAs. A 3'-hydroxy group is left at the tRNA terminus and a 5'-phosphoryl group is left at the trailer molecule.. Zinc phosphodiesterase, which displays some tRNA 3'-processing endonuclease activity. Probably involved in tRNA maturation, by removing a 3'-trailer from precursor tRNA. This chain is Ribonuclease Z, found in Picrophilus torridus (strain ATCC 700027 / DSM 9790 / JCM 10055 / NBRC 100828 / KAW 2/3).